The chain runs to 86 residues: Collagen alpha-1(XII) chain (86 aa).

Residues 1 to 12 (NQPGPPGPPGPP) show a composition bias toward pro residues. The interval 1–86 (NQPGPPGPPG…PGRPGDSGIR (86 aa)) is disordered. Hydroxyproline is present on residues P6, P9, P12, P18, P24, P27, P30, P42, P51, P54, P65, P74, P77, and P80. The span at 16–25 (GEPGPGGRPG) shows a compositional bias: gly residues. Over residues 35-50 (PQGERGLPGEXGERGL) the composition is skewed to low complexity. Low complexity predominate over residues 57 to 71 (QGESRTGPPGSTGSR).

Belongs to the fibril-associated collagens with interrupted helices (FACIT) family. Trimer of identical chains each containing 190 kDa of non-triple-helical sequences. Post-translationally, the triple-helical tail is stabilized by disulfide bonds at each end. In terms of processing, prolines at the third position of the tripeptide repeating unit (G-X-Y) are hydroxylated in some or all of the chains.

The protein localises to the secreted. The protein resides in the extracellular space. Its subcellular location is the extracellular matrix. Functionally, type XII collagen interacts with type I collagen-containing fibrils, the COL1 domain could be associated with the surface of the fibrils, and the COL2 and NC3 domains may be localized in the perifibrillar matrix. The sequence is that of Collagen alpha-1(XII) chain (COL12A1) from Bos taurus (Bovine).